A 570-amino-acid polypeptide reads, in one-letter code: Proline--tRNA ligase (570 aa).

It belongs to the class-II aminoacyl-tRNA synthetase family. ProS type 1 subfamily. In terms of assembly, homodimer.

It localises to the cytoplasm. The catalysed reaction is tRNA(Pro) + L-proline + ATP = L-prolyl-tRNA(Pro) + AMP + diphosphate. In terms of biological role, catalyzes the attachment of proline to tRNA(Pro) in a two-step reaction: proline is first activated by ATP to form Pro-AMP and then transferred to the acceptor end of tRNA(Pro). As ProRS can inadvertently accommodate and process non-cognate amino acids such as alanine and cysteine, to avoid such errors it has two additional distinct editing activities against alanine. One activity is designated as 'pretransfer' editing and involves the tRNA(Pro)-independent hydrolysis of activated Ala-AMP. The other activity is designated 'posttransfer' editing and involves deacylation of mischarged Ala-tRNA(Pro). The misacylated Cys-tRNA(Pro) is not edited by ProRS. This is Proline--tRNA ligase from Shewanella oneidensis (strain ATCC 700550 / JCM 31522 / CIP 106686 / LMG 19005 / NCIMB 14063 / MR-1).